We begin with the raw amino-acid sequence, 60 residues long: Ribosome biogenesis protein Nop10 (60 aa).

Positions 37–60 are disordered; that stretch reads APAPFDPADPHGKYRRALKERRRL. The segment covering 49–60 has biased composition (basic residues); that stretch reads KYRRALKERRRL.

Belongs to the NOP10 family.

Involved in ribosome biogenesis; more specifically in 18S rRNA pseudouridylation and in cleavage of pre-rRNA. The chain is Ribosome biogenesis protein Nop10 from Halobacterium salinarum (strain ATCC 29341 / DSM 671 / R1).